The chain runs to 507 residues: MSYKEKAVKGVSWHLLSYFLAAPIAYLVRVLYANEIPKLDVGLFYAVLDFFSMLVVFRAFGLDQALIRYIPKYLAENRLDMLKSSIVFVGILQTILAFIVAFLVVIFAPYIAEFYINNQGQFTGRLDLVINILIIMAMGYYFLDSIVAFFSNILTGFQLQNYASSTRVVRILSVFIFSLIFIYLFNVHNAYVPSVSYLLMAVVMIIIYGYIVVKKIFPKFAKEKVIFSRKLIRNLFSYGMYVMIGYAGSLILGYLDGICLTYFTGLNAVADYRNVAMPTVNILSYFAFSVGAVLFPMSSELWEKGYKKALSYGVEKVFLYSLIIVTPLAILMAYFPTVIINILFNPKYLSAAPAIQILSFGAMFLTFNSIGFNILNGIGRPNISTKILYIGASFNLIFNILLIPKFGIIGAAITTVFGYFIMWIFQIWFLNKLLEHQFLNKKWILVILVGIFSLIPVMFIKDLIDNVILQLFVCGVVYFGIYILGIFGLKIINIYEVKDIISKIIKR.

A run of 14 helical transmembrane segments spans residues valine 8–valine 28, valine 41–glycine 61, isoleucine 86–isoleucine 106, isoleucine 130–phenylalanine 150, isoleucine 171–tyrosine 191, proline 193–valine 213, leucine 235–leucine 255, valine 275–phenylalanine 295, isoleucine 323–leucine 343, isoleucine 355–leucine 375, isoleucine 387–glycine 407, isoleucine 408–tryptophan 428, isoleucine 444–isoleucine 464, and valine 467–phenylalanine 487.

It belongs to the polysaccharide synthase family.

It is found in the cell membrane. This is an uncharacterized protein from Methanocaldococcus jannaschii (strain ATCC 43067 / DSM 2661 / JAL-1 / JCM 10045 / NBRC 100440) (Methanococcus jannaschii).